A 154-amino-acid chain; its full sequence is Protein X (154 aa).

Residues 68-117 are mitochondrial targeting sequence; that stretch reads PCALRFTSARRMETTVNAHWNLPKVLHKRTLGLSAMSTTDLEAYFKDCVF.

Belongs to the orthohepadnavirus protein X family. May form homodimer. May interact with host CEBPA, CFLAR, CREB1, DDB1, E4F1, HBXIP, HSPD1/HSP60, NFKBIA, POLR2E and SMAD4. Interacts with host SMC5-SMC6 complex and induces its degradation. Interacts with host TRPC4AP; leading to prevent ubiquitination of TRPC4AP. Interacts with host PLSCR1; this interaction promotes ubiquitination and degradation of HBx and impairs HBx-mediated cell proliferation. Post-translationally, a fraction may be phosphorylated in insect cells and HepG2 cells, a human hepatoblastoma cell line. Phosphorylated in vitro by host protein kinase C or mitogen-activated protein kinase. N-acetylated in insect cells.

The protein resides in the host cytoplasm. It is found in the host nucleus. It localises to the host mitochondrion. Its function is as follows. Multifunctional protein that plays a role in silencing host antiviral defenses and promoting viral transcription. Does not seem to be essential for HBV infection. May be directly involved in development of cirrhosis and liver cancer (hepatocellular carcinoma). Most of cytosolic activities involve modulation of cytosolic calcium. The effect on apoptosis is controversial depending on the cell types in which the studies have been conducted. May induce apoptosis by localizing in mitochondria and causing loss of mitochondrial membrane potential. May also modulate apoptosis by binding host CFLAR, a key regulator of the death-inducing signaling complex (DISC). Promotes viral transcription by using the host E3 ubiquitin ligase DDB1 to target the SMC5-SMC6 complex to proteasomal degradation. This host complex would otherwise bind to viral episomal DNA, and prevents its transcription. Moderately stimulates transcription of many different viral and cellular transcription elements. Promoters and enhancers stimulated by HBx contain DNA binding sites for NF-kappa-B, AP-1, AP-2, c-EBP, ATF/CREB, or the calcium-activated factor NF-AT. This is Protein X from Hepatitis B virus genotype B2 (isolate Vietnam/9873/1997) (HBV-B).